A 736-amino-acid polypeptide reads, in one-letter code: Catalase-1 (736 aa).

The interval 1-29 is disordered; that stretch reads MSNIISQAGQKAKEALTSAPSSKKVDDLK. Arg89 provides a ligand contact to heme. His92 is an active-site residue. Residue Arg129 participates in heme binding. Asn165 is a catalytic residue. 4 residues coordinate heme: Phe178, Arg375, Tyr379, and Arg386. A cross-link (3-(S-cysteinyl)-tyrosine (Cys-Tyr)) is located at residues 356-379; the sequence is CTSHVVNGIGFSDDPLLQGRNFSY.

The protein belongs to the catalase family. As to quaternary structure, homotetramer. Requires heme as cofactor. Glycosylated; with alpha-glucose and/or alpha-mannose.

Its subcellular location is the secreted. It is found in the cell wall. It catalyses the reaction 2 H2O2 = O2 + 2 H2O. Its function is as follows. Occurs in almost all aerobically respiring organisms and serves to protect cells from the toxic effects of hydrogen peroxide. The polypeptide is Catalase-1 (cat-1) (Neurospora crassa (strain ATCC 24698 / 74-OR23-1A / CBS 708.71 / DSM 1257 / FGSC 987)).